A 122-amino-acid polypeptide reads, in one-letter code: Large ribosomal subunit protein uL14 (122 aa).

The protein belongs to the universal ribosomal protein uL14 family. In terms of assembly, part of the 50S ribosomal subunit. Forms a cluster with proteins L3 and L19. In the 70S ribosome, L14 and L19 interact and together make contacts with the 16S rRNA in bridges B5 and B8.

Functionally, binds to 23S rRNA. Forms part of two intersubunit bridges in the 70S ribosome. This chain is Large ribosomal subunit protein uL14, found in Bordetella parapertussis (strain 12822 / ATCC BAA-587 / NCTC 13253).